Reading from the N-terminus, the 79-residue chain is Dolichyl-diphosphooligosaccharide--protein glycosyltransferase subunit TMEM258 (79 aa).

2 helical membrane passes run 17–37 and 59–79; these read VFPHLTVVLLAIGMFFKAWFF and VASLFMGFGVHFLLLWVGIFV.

It belongs to the OST5 family. In terms of assembly, component of the oligosaccharyltransferase (OST) complex.

Its subcellular location is the membrane. It is found in the endoplasmic reticulum. It localises to the cytoplasm. It functions in the pathway protein modification; protein glycosylation. Functionally, subunit of the oligosaccharyl transferase (OST) complex that catalyzes the initial transfer of a defined glycan (Glc(3)Man(9)GlcNAc(2) in eukaryotes) from the lipid carrier dolichol-pyrophosphate to an asparagine residue within an Asn-X-Ser/Thr consensus motif in nascent polypeptide chains, the first step in protein N-glycosylation. N-glycosylation occurs cotranslationally and the complex associates with the Sec61 complex at the channel-forming translocon complex that mediates protein translocation across the endoplasmic reticulum (ER). All subunits are required for a maximal enzyme activity. The protein is Dolichyl-diphosphooligosaccharide--protein glycosyltransferase subunit TMEM258 of Danio rerio (Zebrafish).